Here is a 248-residue protein sequence, read N- to C-terminus: Pyridoxine 5'-phosphate synthase (248 aa).

Asparagine 12 is a binding site for 3-amino-2-oxopropyl phosphate. 14–15 (DH) is a binding site for 1-deoxy-D-xylulose 5-phosphate. Position 23 (arginine 23) interacts with 3-amino-2-oxopropyl phosphate. Catalysis depends on histidine 48, which acts as the Proton acceptor. The 1-deoxy-D-xylulose 5-phosphate site is built by arginine 50 and histidine 55. Glutamate 75 (proton acceptor) is an active-site residue. Residue threonine 105 coordinates 1-deoxy-D-xylulose 5-phosphate. Histidine 199 acts as the Proton donor in catalysis. Residues glycine 200 and 221–222 (GH) each bind 3-amino-2-oxopropyl phosphate.

This sequence belongs to the PNP synthase family. In terms of assembly, homooctamer; tetramer of dimers.

It localises to the cytoplasm. It carries out the reaction 3-amino-2-oxopropyl phosphate + 1-deoxy-D-xylulose 5-phosphate = pyridoxine 5'-phosphate + phosphate + 2 H2O + H(+). It functions in the pathway cofactor biosynthesis; pyridoxine 5'-phosphate biosynthesis; pyridoxine 5'-phosphate from D-erythrose 4-phosphate: step 5/5. In terms of biological role, catalyzes the complicated ring closure reaction between the two acyclic compounds 1-deoxy-D-xylulose-5-phosphate (DXP) and 3-amino-2-oxopropyl phosphate (1-amino-acetone-3-phosphate or AAP) to form pyridoxine 5'-phosphate (PNP) and inorganic phosphate. The protein is Pyridoxine 5'-phosphate synthase of Jannaschia sp. (strain CCS1).